The chain runs to 906 residues: Protein translocase subunit SecA (906 aa).

ATP is bound by residues Gln86, 104-108 (GEGKT), and Asp499. The segment at 863–887 (PVVSRIDPKDRNPDDPTSWGRVSRN) is disordered. Residues Cys890, Cys892, Cys901, and His902 each contribute to the Zn(2+) site.

It belongs to the SecA family. Monomer and homodimer. Part of the essential Sec protein translocation apparatus which comprises SecA, SecYEG and auxiliary proteins SecDF-YajC and YidC. Zn(2+) is required as a cofactor.

The protein localises to the cell inner membrane. It localises to the cytoplasm. The enzyme catalyses ATP + H2O + cellular proteinSide 1 = ADP + phosphate + cellular proteinSide 2.. In terms of biological role, part of the Sec protein translocase complex. Interacts with the SecYEG preprotein conducting channel. Has a central role in coupling the hydrolysis of ATP to the transfer of proteins into and across the cell membrane, serving both as a receptor for the preprotein-SecB complex and as an ATP-driven molecular motor driving the stepwise translocation of polypeptide chains across the membrane. This is Protein translocase subunit SecA from Rickettsia rickettsii (strain Iowa).